Consider the following 1681-residue polypeptide: Sodium channel protein type 7 subunit alpha (1681 aa).

Residues 1 to 118 (MLTSPEPKGL…RRAAIKALVH (118 aa)) are Cytoplasmic-facing. One copy of the I repeat lies at 101–402 (TLSPLNSLRR…ILTMTYEKEK (302 aa)). Residues 119-138 (PLFRLLILISVLTDSILMCM) traverse the membrane as a helical segment. Over 139–142 (SNLP) the chain is Extracellular. The chain crosses the membrane as a helical span at residues 143 to 168 (EWILAIENTLLGIYAFEILVKVIARG). Over 169-179 (IWAGSFSFLGD) the chain is Cytoplasmic. Residues 180–197 (LWNWLDFSVTLFELITRF) traverse the membrane as a helical segment. The Extracellular segment spans residues 198 to 201 (SPLS). A helical membrane pass occupies residues 202-220 (SFLMLKTIRTFRILKIIPL). Residues 221-238 (NHGLQSIVMTLAQCLKKL) lie on the Cytoplasmic side of the membrane. A helical transmembrane segment spans residues 239-260 (FGAIALALFFLAVFSLLGMGLF). The Extracellular segment spans residues 261-339 (MGNLKHKCLR…PDNGFTSFDN (79 aa)). The cysteines at positions 268 and 308 are disulfide-linked. 4 N-linked (GlcNAc...) asparagine glycosylation sites follow: Asn-277, Asn-282, Asn-288, and Asn-310. The segment at residues 340–367 (FGWSLLAMFRLMTQDYPELLYHQILYAS) is an intramembrane region (pore-forming). Position 368 (Gly-368) is a topological domain, extracellular. The chain crosses the membrane as a helical span at residues 369–408 (KVYMIFFVMISFWFAFYLTSLFLGILTMTYEKEKQRACEE). At 409–506 (SGGLDPKCQQ…EFADRVITHP (98 aa)) the chain is on the cytoplasmic side. The stretch at 488-757 (CSPCWVKLNE…QLAMARIKSG (270 aa)) is one II repeat. Residues 507 to 522 (LADLFLVICIVLNICF) traverse the membrane as a helical segment. Over 523-531 (LALEHFPMS) the chain is Extracellular. A helical membrane pass occupies residues 532–560 (EELRSLLHVGNLVFIGIYTIEMILKIIAM). The Cytoplasmic portion of the chain corresponds to 561 to 569 (HPYGYFQIS). Residues 570-587 (WNIFDSILVVLELTEILL) form a helical membrane-spanning segment. The Extracellular portion of the chain corresponds to 588 to 593 (ADVEGL). The chain crosses the membrane as a helical span at residues 594–609 (AVLITVPLIFIKLGKY). The Cytoplasmic portion of the chain corresponds to 610–626 (GPPFKSLMRILGSSLMA). Residues 627-655 (LKDLVLLLCIFVYFSAVFGMKLFGRSYKD) form a helical membrane-spanning segment. At 656 to 673 (CVCHIKEDCQPQRWHMSD) the chain is on the extracellular side. 2 cysteine pairs are disulfide-bonded: Cys-658–Cys-664 and Cys-696–Cys-705. An intramembrane region (pore-forming) is located at residues 674-700 (FLHAYMTVFRILCGEWIETLWECMEVA). Gly-701 is a topological domain (extracellular). Residues 702–732 (QAWCIPFYMMVILIGNLLILYLFVTLVSSFS) form a helical membrane-spanning segment. Residues 733 to 934 (YYDATSEVNK…KTCCKIVENS (202 aa)) are Cytoplasmic-facing. Over residues 806-834 (YKDQSSSTEKTPVTESESQSLIASPSASE) the composition is skewed to polar residues. Residues 806 to 875 (YKDQSSSTEK…MKQSSSSECS (70 aa)) form a disordered region. Ser-843 bears the Phosphoserine mark. One copy of the III repeat lies at 916–1224 (NGKIWKNIRK…KKQYRALKKL (309 aa)). The helical transmembrane segment at 935 to 953 (WFECFIGLVTLLCTGTLAL) threads the bilayer. Topologically, residues 954 to 961 (EDIYIDQR) are extracellular. Residues 962 to 990 (KTTKILLEYADMIFAYIFILEMLLKWVAY) traverse the membrane as a helical segment. Residues 991 to 998 (GFKAFFSN) are Cytoplasmic-facing. A helical membrane pass occupies residues 999–1020 (NWYKLDFMVVIVFCLSLIGKTR). A topological domain (extracellular) is located at residue Glu-1021. A helical transmembrane segment spans residues 1022–1040 (DLNPLTSIKFLRALRVLSQ). At 1041 to 1055 (FERMKVVLRALIKTT) the chain is on the cytoplasmic side. A helical membrane pass occupies residues 1056-1080 (LPTVSVFLVCLMIWLLFSVIGVQLF). Residues 1081 to 1127 (AGKFYECIDPTKGERFPVFEVMNKSQCEKLLFNESMPWENAKLNFDN) are Extracellular-facing. A disulfide bond links Cys-1087 and Cys-1107. Residues Asn-1103 and Asn-1113 are each glycosylated (N-linked (GlcNAc...) asparagine). An intramembrane region (pore-forming) is located at residues 1128–1154 (VGNGFLSLLQVATFNGWISIMNSAIDS). Residues 1155-1167 (VGVNMQPSFEYNL) lie on the Extracellular side of the membrane. A helical membrane pass occupies residues 1168-1202 (YMYSYFIIFVIFGLFLPLCMLIGVIIRNFNKQKIK). Over 1203–1250 (QGGSNIFITVKQKKQYRALKKLLYADVQKPTPRPRNKFQGFLFDLVTH) the chain is Cytoplasmic. The stretch at 1233 to 1531 (TPRPRNKFQG…WNRFDPDRTQ (299 aa)) is one IV repeat. The chain crosses the membrane as a helical span at residues 1251–1272 (RVFNVIIILLICFQATTIMIQK). At 1273–1276 (DEQS) the chain is on the extracellular side. The chain crosses the membrane as a helical span at residues 1277-1305 (PQMETAIFWMNSIFVMLFTLECILKLTAF). Over 1306 to 1312 (RCHYFTS) the chain is Cytoplasmic. A helical membrane pass occupies residues 1313 to 1338 (AWNVHDFMVVIFSITGLLLPLTIGQY). Over 1339-1341 (FVP) the chain is Extracellular. A helical membrane pass occupies residues 1342 to 1362 (PSLVQLILLSRVIHILRPGKG). The Cytoplasmic segment spans residues 1363-1377 (PKVFHDLMLPLILAL). Residues 1378–1402 (PALLNISLLIFLVMFIYAIFGMYNF) form a helical membrane-spanning segment. The Extracellular portion of the chain corresponds to 1403–1420 (AYVKKEAGINDVSNFETF). The segment at residues 1421-1444 (GSSMLCLFQVTTFSGWDGMLDAIF) is an intramembrane region (pore-forming). Topologically, residues 1445–1468 (NSQWSDCDPDKINPGTQVKGDCGS) are extracellular. Cys-1451 and Cys-1466 are joined by a disulfide. Residues 1469-1504 (PSVGISYFVSYILISWLIIVNMYIVLIMEFLSIPSQ) traverse the membrane as a helical segment. At 1505 to 1681 (KKSRTLSEDD…EEKASIQTQI (177 aa)) the chain is on the cytoplasmic side. The span at 1647–1662 (NVSDTPAIDDRRDDLT) shows a compositional bias: basic and acidic residues. Residues 1647–1681 (NVSDTPAIDDRRDDLTSKGAHSGKIEEKASIQTQI) are disordered.

This sequence belongs to the sodium channel (TC 1.A.1.10) family. SCN7A subfamily. In terms of assembly, the sodium channel formed by SCN7A is probably a heterooligomeric complex consisting of the ion conducting pore forming alpha subunit SCN7A and regulatory beta subunits such as SCN3B. Interacts with ATP1A1; activates ATP1A1 and thereby indirectly signals to nearby neurons to regulate sodium homeostasis. Not tissue specific but widely expressed. Expressed in regions of the central nervous system that control body fluid ionic balance.

The protein localises to the cell membrane. It carries out the reaction Na(+)(in) = Na(+)(out). Sodium leak channel functioning as an osmosensor regulating sodium ion levels in various tissues and organs. While most sodium channels are voltage-gated, SCN7A is not and lets sodium flow through membrane along its concentration gradient. In glial cells of the central nervous system, senses body-fluid sodium levels and controls salt intake behavior as well as voluntary water intake through activation of nearby neurons to maintain appropriate sodium levels in the body. By mediating sodium influx into keratinocytes, also plays a role in skin barrier homeostasis. The polypeptide is Sodium channel protein type 7 subunit alpha (Mus musculus (Mouse)).